Here is an 847-residue protein sequence, read N- to C-terminus: Pep5-like zinc finger protein C16A10.03c (847 aa).

The CHCR repeat unit spans residues 387-526 (YIEAIPFSDS…GIWLFNSDPM (140 aa)). The segment at 780 to 814 (CDNCEGLLDVPFVSYSCLHLVHRDCATETVCPKCK) adopts an RING-type; atypical zinc-finger fold.

It localises to the cytoplasm. The protein resides in the nucleus. This is Pep5-like zinc finger protein C16A10.03c from Schizosaccharomyces pombe (strain 972 / ATCC 24843) (Fission yeast).